Here is a 161-residue protein sequence, read N- to C-terminus: Large ribosomal subunit protein uL15 (161 aa).

The disordered stretch occupies residues 1-43 (MKLSEIADNVGSRKKRMRIGRGIGSGKGKTGGRGGKGQTARSG). A compositionally biased stretch (gly residues) spans 21 to 37 (RGIGSGKGKTGGRGGKG).

As to quaternary structure, part of the 50S ribosomal subunit.

Functionally, binds to the 23S rRNA. This is Large ribosomal subunit protein uL15 from Rhodopseudomonas palustris (strain ATCC BAA-98 / CGA009).